Consider the following 546-residue polypeptide: CTP synthase (546 aa).

An amidoligase domain region spans residues 1–266 (MTTRYIFVTG…DQLVTKRFGI (266 aa)). A CTP-binding site is contributed by serine 14. Serine 14 is a binding site for UTP. ATP contacts are provided by residues 15–20 (SLGKGI) and aspartate 72. Residues aspartate 72 and glutamate 140 each contribute to the Mg(2+) site. Residues 147–149 (DIE), 187–192 (KTKPTQ), and lysine 223 each bind CTP. UTP is bound by residues 187–192 (KTKPTQ) and lysine 223. 239-241 (KDV) lines the ATP pocket. The region spanning 291–542 (TIGMVGKYIE…VAAAYTYQKR (252 aa)) is the Glutamine amidotransferase type-1 domain. Glycine 352 provides a ligand contact to L-glutamine. Residue cysteine 379 is the Nucleophile; for glutamine hydrolysis of the active site. L-glutamine is bound by residues 380-383 (LGMQ), glutamate 403, and arginine 470. Active-site residues include histidine 515 and glutamate 517.

The protein belongs to the CTP synthase family. In terms of assembly, homotetramer.

The catalysed reaction is UTP + L-glutamine + ATP + H2O = CTP + L-glutamate + ADP + phosphate + 2 H(+). It catalyses the reaction L-glutamine + H2O = L-glutamate + NH4(+). It carries out the reaction UTP + NH4(+) + ATP = CTP + ADP + phosphate + 2 H(+). It participates in pyrimidine metabolism; CTP biosynthesis via de novo pathway; CTP from UDP: step 2/2. Its activity is regulated as follows. Allosterically activated by GTP, when glutamine is the substrate; GTP has no effect on the reaction when ammonia is the substrate. The allosteric effector GTP functions by stabilizing the protein conformation that binds the tetrahedral intermediate(s) formed during glutamine hydrolysis. Inhibited by the product CTP, via allosteric rather than competitive inhibition. Its function is as follows. Catalyzes the ATP-dependent amination of UTP to CTP with either L-glutamine or ammonia as the source of nitrogen. Regulates intracellular CTP levels through interactions with the four ribonucleotide triphosphates. The protein is CTP synthase of Shewanella halifaxensis (strain HAW-EB4).